The sequence spans 323 residues: o-succinylbenzoate synthase (323 aa).

K134 (proton donor) is an active-site residue. D162, E191, and D214 together coordinate Mg(2+). The active-site Proton acceptor is the K236.

Belongs to the mandelate racemase/muconate lactonizing enzyme family. MenC type 1 subfamily. A divalent metal cation is required as a cofactor.

The enzyme catalyses (1R,6R)-6-hydroxy-2-succinyl-cyclohexa-2,4-diene-1-carboxylate = 2-succinylbenzoate + H2O. It functions in the pathway quinol/quinone metabolism; 1,4-dihydroxy-2-naphthoate biosynthesis; 1,4-dihydroxy-2-naphthoate from chorismate: step 4/7. The protein operates within quinol/quinone metabolism; menaquinone biosynthesis. Functionally, converts 2-succinyl-6-hydroxy-2,4-cyclohexadiene-1-carboxylate (SHCHC) to 2-succinylbenzoate (OSB). The chain is o-succinylbenzoate synthase from Photorhabdus laumondii subsp. laumondii (strain DSM 15139 / CIP 105565 / TT01) (Photorhabdus luminescens subsp. laumondii).